Consider the following 20-residue polypeptide: IPCRKAIDVPFGXRYVVXTW.

Its subcellular location is the secreted. The protein resides in the cell wall. In Arabidopsis thaliana (Mouse-ear cress), this protein is 23 kDa cell wall protein.